The following is an 878-amino-acid chain: Pyruvate, phosphate dikinase (878 aa).

Residues 1-347 form an N-terminal region; sequence MKKLIYYFGS…LYILQTRTAK (347 aa). Arg96 provides a ligand contact to ATP. Positions 348-404 are linker 1; that stretch reads RTAIAAINIAVQMVEEKLISKEQALMRIDPESLNQLLHTRIDYSKGLTSIAEGLPAS. The segment at 405–502 is central; sequence PGAATGIAVF…VIKQGDIITI (98 aa). Phosphothreonine; by PDRP1 is present on Thr457. The active-site Tele-phosphohistidine intermediate is the His459. Residues 503–537 form a linker 2 region; that stretch reads DGGSGKIFLGEMPLIQPTFSEESKLILDWADEISS. The C-terminal stretch occupies residues 538-878; the sequence is LKVRANAETV…ASAQAKIKHG (341 aa). Residues Arg565, Arg621, Glu749, Gly770, Thr771, Asn772, and Asp773 each coordinate substrate. Position 749 (Glu749) interacts with Mg(2+). Asp773 contacts Mg(2+). Residue Cys835 is the Proton donor of the active site.

This sequence belongs to the PEP-utilizing enzyme family. Homodimer. Mg(2+) serves as cofactor. Phosphorylation of Thr-457 in the dark inactivates the enzyme. Dephosphorylation upon light stimulation reactivates the enzyme.

It carries out the reaction pyruvate + phosphate + ATP = phosphoenolpyruvate + AMP + diphosphate + H(+). With respect to regulation, activated by light-induced dephosphorylation. Inhibited by dark-induced phosphorylation. Both reactions are catalyzed by PDRP1. Its function is as follows. Catalyzes the reversible phosphorylation of pyruvate and phosphate. The protein is Pyruvate, phosphate dikinase (ppdK) of Rickettsia felis (strain ATCC VR-1525 / URRWXCal2) (Rickettsia azadi).